The sequence spans 461 residues: Inositol-trisphosphate 3-kinase A (461 aa).

Positions 1 to 29 are disordered; sequence MTLPGGPTGMARPGGARPCSPGLERAPRR. The segment at 1–133 is required for cytoskeleton location; sequence MTLPGGPTGM…SVSSTGSSSL (133 aa). Residues R35, R55, and R62 each carry the omega-N-methylarginine modification. Residues 49-160 are disordered; the sequence is AAAGEPRARG…GNVQLEAGED (112 aa). Residues 118-134 show a composition bias toward low complexity; sequence RRLSTSSVSSTGSSSLL. 2 positions are modified to phosphoserine: S137 and S197. Residues S197, K209, 249–251, and D262 each bind ATP; that span reads QDL. K264 and R285 together coordinate substrate. Positions 287 to 295 are calmodulin-binding; sequence DMYKKMLAV. Residue 312–319 coordinates substrate; that stretch reads KPRYMQWR. The ATP site is built by K336 and D416. K419 contacts substrate.

Belongs to the inositol phosphokinase (IPK) family. Expressed in brain.

The protein resides in the cytoplasm. It localises to the cytoskeleton. The catalysed reaction is 1D-myo-inositol 1,4,5-trisphosphate + ATP = 1D-myo-inositol 1,3,4,5-tetrakisphosphate + ADP + H(+). With respect to regulation, activated by calcium/calmodulin. Its function is as follows. Catalyzes the phosphorylation of 1D-myo-inositol 1,4,5-trisphosphate (InsP3) into 1D-myo-inositol 1,3,4,5-tetrakisphosphate and participates to the regulation of calcium homeostasis. The sequence is that of Inositol-trisphosphate 3-kinase A from Homo sapiens (Human).